Here is a 303-residue protein sequence, read N- to C-terminus: Mitochondrial basic amino acids transporter (303 aa).

The next 6 helical transmembrane spans lie at 2 to 22, 61 to 81, 96 to 116, 153 to 172, 187 to 207, and 255 to 275; these read ALDFLAGCAGGVAGVLVGHPF, GLGSPLMGLTFINALVFGVQG, FLAGAAAGAIQCVICCPMELA, GMVSTLLRETPSFGVYFLTY, LLVPKLLLAGGTSGIVSWLST, and LLRAFPVNAATFATVTVVLTY. Solcar repeat units lie at residues 2–86, 90–178, and 185–275; these read ALDF…TLRA, DSPL…LTRA, and DRLL…VLTY. Residues 282–303 are disordered; that stretch reads GPEGEAVPAAPAGPALAQPSSL. Low complexity predominate over residues 284–303; sequence EGEAVPAAPAGPALAQPSSL.

This sequence belongs to the mitochondrial carrier (TC 2.A.29) family.

Its subcellular location is the mitochondrion inner membrane. It carries out the reaction L-lysine(out) + L-arginine(in) = L-lysine(in) + L-arginine(out). It catalyses the reaction L-histidine(out) + L-arginine(in) = L-histidine(in) + L-arginine(out). The enzyme catalyses L-ornithine(in) + L-arginine(out) = L-ornithine(out) + L-arginine(in). The catalysed reaction is L-homoarginine(in) + L-arginine(out) = L-homoarginine(out) + L-arginine(in). It carries out the reaction N(omega)-methyl-L-arginine(in) + L-arginine(out) = N(omega)-methyl-L-arginine(out) + L-arginine(in). It catalyses the reaction L-arginine(in) = L-arginine(out). The enzyme catalyses L-lysine(in) = L-lysine(out). The catalysed reaction is L-ornithine(in) = L-ornithine(out). It carries out the reaction L-histidine(out) = L-histidine(in). In terms of biological role, mitochondrial transporter of arginine, lysine, homoarginine, methylarginine and, to a much lesser extent, ornithine and histidine. Does not transport carnitine nor acylcarnitines. Functions by both counter-exchange and uniport mechanisms. Plays a physiological role in the import of basic amino acids into mitochondria for mitochondrial protein synthesis and amino acid degradation. The sequence is that of Mitochondrial basic amino acids transporter from Homo sapiens (Human).